Here is an 87-residue protein sequence, read N- to C-terminus: Ribonuclease P protein component 1 (87 aa).

The protein belongs to the eukaryotic/archaeal RNase P protein component 1 family. In terms of assembly, consists of a catalytic RNA component and at least 4-5 protein subunits.

The protein resides in the cytoplasm. It catalyses the reaction Endonucleolytic cleavage of RNA, removing 5'-extranucleotides from tRNA precursor.. Its function is as follows. Part of ribonuclease P, a protein complex that generates mature tRNA molecules by cleaving their 5'-ends. The protein is Ribonuclease P protein component 1 of Thermoplasma acidophilum (strain ATCC 25905 / DSM 1728 / JCM 9062 / NBRC 15155 / AMRC-C165).